The primary structure comprises 136 residues: Ribosome-binding factor A (136 aa).

It belongs to the RbfA family. As to quaternary structure, monomer. Binds 30S ribosomal subunits, but not 50S ribosomal subunits or 70S ribosomes.

It localises to the cytoplasm. In terms of biological role, one of several proteins that assist in the late maturation steps of the functional core of the 30S ribosomal subunit. Associates with free 30S ribosomal subunits (but not with 30S subunits that are part of 70S ribosomes or polysomes). Required for efficient processing of 16S rRNA. May interact with the 5'-terminal helix region of 16S rRNA. This Photorhabdus laumondii subsp. laumondii (strain DSM 15139 / CIP 105565 / TT01) (Photorhabdus luminescens subsp. laumondii) protein is Ribosome-binding factor A.